Consider the following 219-residue polypeptide: Glutathione S-transferase (219 aa).

Residues 2-89 enclose the GST N-terminal domain; the sequence is SQPILGYWDI…YLGRKYKLNG (88 aa). Glutathione is bound by residues 8–9, 44–47, K51, 60–61, and 73–74; these read YW, RSEW, NL, and QT. The 117-residue stretch at 91 to 207 folds into the GST C-terminal domain; that stretch reads NDHEEIRISM…YIKKQQPKTF (117 aa). Y117 provides a ligand contact to substrate.

It belongs to the GST superfamily. Mu family. In terms of assembly, homodimer.

It is found in the cytoplasm. The catalysed reaction is RX + glutathione = an S-substituted glutathione + a halide anion + H(+). This chain is Glutathione S-transferase, found in Dermatophagoides pteronyssinus (European house dust mite).